Consider the following 512-residue polypeptide: Histidine ammonia-lyase (512 aa).

The segment at residues 145–147 (ASG) is a cross-link (5-imidazolinone (Ala-Gly)). Serine 146 bears the 2,3-didehydroalanine (Ser) mark.

Belongs to the PAL/histidase family. In terms of processing, contains an active site 4-methylidene-imidazol-5-one (MIO), which is formed autocatalytically by cyclization and dehydration of residues Ala-Ser-Gly.

The protein localises to the cytoplasm. It catalyses the reaction L-histidine = trans-urocanate + NH4(+). It functions in the pathway amino-acid degradation; L-histidine degradation into L-glutamate; N-formimidoyl-L-glutamate from L-histidine: step 1/3. The sequence is that of Histidine ammonia-lyase from Pseudomonas fluorescens (strain SBW25).